A 427-amino-acid chain; its full sequence is O-methyltransferase FrzF (427 aa).

Position 281 (Asp281) interacts with S-adenosyl-L-methionine. The active-site Proton acceptor is the His327.

This sequence belongs to the class I-like SAM-binding methyltransferase superfamily. Cation-independent O-methyltransferase family. In terms of assembly, homodimer.

It catalyses the reaction (1S,4S)-4-[(4-hydroxyphenyl)methyl]-2,5-diazaspiro[bicyclo[3.2.1]octane-6,1'-cyclohexan]-4'-one + S-adenosyl-L-methionine = (1S,4S)-4-[(4-methoxyphenyl)methyl]-2,5-diazaspiro[bicyclo[3.2.1]octane-6,1'-cyclohexan]-4'-one + S-adenosyl-L-homocysteine + H(+). The enzyme catalyses (1S,4S)-4-[(4-hydroxyphenyl)methyl]-2-methyl-2,5-diazaspiro[bicyclo[3.2.1]octane-6,1'-cyclohexan]-4'-one + S-adenosyl-L-methionine = (1S,4S)-4-[(4-methoxyphenyl)methyl]-2-methyl-2,5-diazaspiro[bicyclo[3.2.1]octane-6,1'-cyclohexan]-4'-one + S-adenosyl-L-homocysteine + H(+). Its pathway is secondary metabolite biosynthesis. Its function is as follows. O-methyltransferase; part of the gene cluster that mediates the biosynthesis of the alkaloid (-)-FR901483, a potent immunosuppressant that shows efficacy in animal models and a probable inhibitor of purine nucleotide biosynthesis by targeting phosphoribosylpyrophosphate amidotransferase (PPAT). Within the pathway, FrzF methylates the phenolic oxygen at position C4. The biosynthesis of (-)-FR901483 starts with the condensation of two L-tyrosines to yield (S,S)-dityrosyl-piperazine. This process occurs in 3 steps with the non-canonical nonribosomal peptide synthetase FrzA catalyzing the reduction of L-tyrosine into L-tyrosinal, the spontaneous condensation of 2 L-tyrosinal units, and the subsequent reduction by the NmrA-like family domain-containing oxidoreductase FrzB. The cytochrome P450 monooxygenase FrzC then performs coupling between N10 and C1' to morph the piperazine into a 1,4-diazabicyclo[3.2.1]octane spiro-fused to a 2,5-cyclohexadienone. The dienone portion is further reduced to cyclohexanone by the flavin-dependent reductase FrzD. The methyltranserases (MTs) FrzE and FrzF are then involved in the methylation at the C10' amine and the C4 phenolic oxygen, respectively. The order of the two MTs appear to be interchangeable. Cleavage of the C9-N10' bond by the dioxygenase FrzG then leads to formation of a conjugated iminium. In addition to the oxidation of C9, an additional dehydrogenation between C7 and C8 can occur to give a likely shunt product. The next biosynthetic step is the intramolecular aldol condensation catalyzed by the newly identified aldolase FrzH to yield an aza-tricyclic product with the formation of a C9-C3' bond. The short-chain dehydrogenase/reductase FrzI then produces dephospho-(-)-FR901483 that is phosphorylated at C4'-OH into (-)-FR901483 by the phosphotransferase FrzJ. The protein is O-methyltransferase FrzF of Cladobotryum sp.